The sequence spans 331 residues: Polysaccharide lyase (331 aa).

A signal peptide spans 1–22; that stretch reads MSLPLRLALLPTLLASASAFAA. Cys-23 carries the N-palmitoyl cysteine lipid modification. Residue Cys-23 is the site of S-diacylglycerol cysteine attachment.

Belongs to the polysaccharide lyase 5 family.

Its subcellular location is the cell outer membrane. The catalysed reaction is Eliminative cleavage of alginate to give oligosaccharides with 4-deoxy-alpha-L-erythro-hex-4-enuronosyl groups at their non-reducing ends and beta-D-mannuronate at their reducing end.. It catalyses the reaction [hyaluronan](n) = n 3-(4-deoxy-beta-D-gluc-4-enuronosyl)-N-acetyl-D-glucosamine + H2O. The enzyme catalyses Eliminative cleavage of (1-&gt;4)-beta-D-glucuronans to give oligosaccharides with 4-deoxy-beta-D-gluc-4-enuronosyl groups at their non-reducing ends. Complete degradation of glucuronans results in the formation of tetrasaccharides.. Is inhibited by mono- and divalent cations as well as L-ascorbic acid 6-hexadecanoate. In terms of biological role, polysaccharide lyase that catalyzes the depolymerization of several anionic polysaccharides via a beta-elimination mechanism. Exhibits broad substrate specificity, catalyzing the degradation of not only alginate and poly-beta-D-mannuronate (poly-ManA), but poly-beta-D-glucuronate (poly-GlcA or poly-GlcUA) and hyaluronate (HA) as well. The oligosaccharide products formed by enzymatic cleavage are comprised mainly of disaccharides, with a lower abundance of trimers and pentamers. Is not active on poly-D-galacturonate, heparin and heparin sulfate. This Stenotrophomonas maltophilia (strain K279a) protein is Polysaccharide lyase.